A 66-amino-acid chain; its full sequence is Large ribosomal subunit protein uL29 (66 aa).

The protein belongs to the universal ribosomal protein uL29 family.

This Helicobacter pylori (strain P12) protein is Large ribosomal subunit protein uL29.